The chain runs to 391 residues: Isocitrate dehydrogenase [NADP] (391 aa).

D-threo-isocitrate is bound by residues serine 102, asparagine 104, arginine 108, arginine 118, and arginine 142. Residue aspartate 283 participates in Mg(2+) binding.

It belongs to the isocitrate and isopropylmalate dehydrogenases family. As to quaternary structure, homodimer. The cofactor is Mg(2+). Mn(2+) is required as a cofactor.

It carries out the reaction D-threo-isocitrate + NADP(+) = 2-oxoglutarate + CO2 + NADPH. Functionally, catalyzes the oxidative decarboxylation of isocitrate to 2-oxoglutarate and carbon dioxide with the concomitant reduction of NADP(+). The polypeptide is Isocitrate dehydrogenase [NADP] (icd) (Streptococcus salivarius).